We begin with the raw amino-acid sequence, 209 residues long: Regulator of G-protein signaling 1 (209 aa).

The disordered stretch occupies residues 18–42 (FFSASPKDSKEPSHSLLDDNKQKKR). Residues 24–38 (KDSKEPSHSLLDDNK) are compositionally biased toward basic and acidic residues. Residues 85-200 (SLEKLLANQM…LKSNIYLNLL (116 aa)) form the RGS domain.

In terms of assembly, interacts with GNAI1 and GNAQ. Expressed in multiple tissues.

It localises to the cell membrane. Its subcellular location is the cytoplasm. The protein resides in the cytosol. Its function is as follows. Regulates G protein-coupled receptor signaling cascades, including signaling downstream of the N-formylpeptide chemoattractant receptors and leukotriene receptors. Inhibits B cell chemotaxis toward CXCL12. Inhibits signal transduction by increasing the GTPase activity of G protein alpha subunits, thereby driving them into their inactive GDP-bound form. The chain is Regulator of G-protein signaling 1 (Rgs1) from Rattus norvegicus (Rat).